Consider the following 120-residue polypeptide: Protein GP96 (120 aa).

The protein belongs to the herpesviridae UL96 family.

This Cavia porcellus (Guinea pig) protein is Protein GP96.